A 354-amino-acid polypeptide reads, in one-letter code: V-type proton ATPase subunit C (354 aa).

Belongs to the V-ATPase C subunit family. As to quaternary structure, V-ATPase is a heteromultimeric enzyme composed of a peripheral catalytic V1 complex (components A to H) attached to an integral membrane V0 proton pore complex (components: a, c, c', c'' and d).

It is found in the vacuole membrane. Functionally, subunit of the peripheral V1 complex of vacuolar ATPase. Subunit C is necessary for the assembly of the catalytic sector of the enzyme and is likely to have a specific function in its catalytic activity. V-ATPase is responsible for acidifying a variety of intracellular compartments in eukaryotic cells. The sequence is that of V-type proton ATPase subunit C (VATC) from Hordeum vulgare (Barley).